We begin with the raw amino-acid sequence, 179 residues long: Large ribosomal subunit protein uL5 (179 aa).

It belongs to the universal ribosomal protein uL5 family. Part of the 50S ribosomal subunit; part of the 5S rRNA/L5/L18/L25 subcomplex. Contacts the 5S rRNA and the P site tRNA. Forms a bridge to the 30S subunit in the 70S ribosome.

In terms of biological role, this is one of the proteins that bind and probably mediate the attachment of the 5S RNA into the large ribosomal subunit, where it forms part of the central protuberance. In the 70S ribosome it contacts protein S13 of the 30S subunit (bridge B1b), connecting the 2 subunits; this bridge is implicated in subunit movement. Contacts the P site tRNA; the 5S rRNA and some of its associated proteins might help stabilize positioning of ribosome-bound tRNAs. The protein is Large ribosomal subunit protein uL5 of Prochlorococcus marinus (strain MIT 9312).